The primary structure comprises 343 residues: MAKTYKIAVIPGDGIGKEVTPWAQKALEKAAEGVADFEYENFDLGAERYLRDGAILPEDEEERIKANDAILLGAVGDPRIKAGILERGLLLKLRFDLDQYVNLRPSKLYKGVTSPLANPGDIDFVVVREGTEGLYCGAGGAVRRNTPQEVATEVSINTAYGVERVVRYAFKLAMKRKKHVTLVHKKNVLVNAGDMWQRIVDKVGEEYPEVTHDYQHIDAATIFLVSDPSRFDVILTDNLFGDILTDEAGSVVGGVGYSASGCINASDEFPSMFEPIHGSAPDIAGQNKANPTAAILSAAMLLEHLGFDDAAKKIHTAVEADIEELGSTVRSTDQVGKDILARM.

R94, R104, R128, and D218 together coordinate substrate. Mg(2+) is bound by residues D218, D242, and D246. Position 278–290 (278–290 (GSAPDIAGQNKAN)) interacts with NAD(+).

It belongs to the isocitrate and isopropylmalate dehydrogenases family. LeuB type 2 subfamily. As to quaternary structure, homodimer. Requires Mg(2+) as cofactor. It depends on Mn(2+) as a cofactor.

The protein localises to the cytoplasm. It carries out the reaction (2R,3S)-3-isopropylmalate + NAD(+) = 4-methyl-2-oxopentanoate + CO2 + NADH. It functions in the pathway amino-acid biosynthesis; L-leucine biosynthesis; L-leucine from 3-methyl-2-oxobutanoate: step 3/4. Its function is as follows. Catalyzes the oxidation of 3-carboxy-2-hydroxy-4-methylpentanoate (3-isopropylmalate) to 3-carboxy-4-methyl-2-oxopentanoate. The product decarboxylates to 4-methyl-2 oxopentanoate. The protein is 3-isopropylmalate dehydrogenase of Bifidobacterium longum (strain DJO10A).